Consider the following 1036-residue polypeptide: Lethal(2) giant larvae protein homolog 1 (1036 aa).

WD repeat units lie at residues 38 to 71 (SALA…FTGL), 78 to 119 (VTQM…GLSF), 139 to 175 (VTVV…GQTL), 199 to 233 (SLQG…EHVF), 239 to 271 (LESL…GSPP), 289 to 331 (AINK…ETLV), 339 to 373 (VIDF…VLDL), 395 to 473 (TCSA…YKLS), 517 to 592 (QKVA…RVLI), and 601 to 662 (TAVA…LRQS). Phosphoserine is present on Ser662. The disordered stretch occupies residues 670–694 (RVSGKKRATTASSKLQEANAQLAEQ). Polar residues predominate over residues 678 to 693 (TTASSKLQEANAQLAE). 4 WD repeats span residues 722 to 782 (VRCL…KEVQ), 791 to 843 (AIAV…VSAK), 848 to 901 (LTAH…VHYS), and 915 to 938 (VFTR…SLSA). Thr957 carries the phosphothreonine modification. Phosphoserine occurs at positions 964, 982, and 989. The interval 980–1002 (PESCEGSPSSAHSKRADTMEPPE) is disordered.

This sequence belongs to the WD repeat L(2)GL family. As to quaternary structure, associated with nonmuscle myosin II heavy chain. Interacts with PRKCI/aPKC, PARD6B/Par-6 and PARD6A. Interacts with STX4A. Interacts with DCAF1. Interacts with RAB10 (GDP-bound form); the interaction is direct and promotes RAB10 association with membranes and activation through competition with the Rab inhibitor GDI1. In terms of processing, phosphorylated by PRKCI. As to expression, expressed at high level in the testis and at lower level in ovary, brain, spleen and kidney.

It localises to the early endosome membrane. The protein localises to the golgi apparatus. Its subcellular location is the trans-Golgi network membrane. The protein resides in the golgi apparatus membrane. It is found in the cell projection. It localises to the axon. The protein localises to the cytoplasm. Its subcellular location is the cytoskeleton. In terms of biological role, cortical cytoskeleton protein found in a complex involved in maintaining cell polarity and epithelial integrity. Involved in the regulation of mitotic spindle orientation, proliferation, differentiation and tissue organization of neuroepithelial cells. Involved in axonogenesis through RAB10 activation thereby regulating vesicular membrane trafficking toward the axonal plasma membrane. This is Lethal(2) giant larvae protein homolog 1 (Llgl1) from Rattus norvegicus (Rat).